Reading from the N-terminus, the 102-residue chain is Small ribosomal subunit protein uS10 (102 aa).

The protein belongs to the universal ribosomal protein uS10 family. In terms of assembly, part of the 30S ribosomal subunit.

Functionally, involved in the binding of tRNA to the ribosomes. The chain is Small ribosomal subunit protein uS10 from Bartonella tribocorum (strain CIP 105476 / IBS 506).